Here is a 56-residue protein sequence, read N- to C-terminus: Ribosome biogenesis protein Nop10 (56 aa).

The protein belongs to the NOP10 family.

In terms of biological role, involved in ribosome biogenesis; more specifically in 18S rRNA pseudouridylation and in cleavage of pre-rRNA. This is Ribosome biogenesis protein Nop10 from Methanococcoides burtonii (strain DSM 6242 / NBRC 107633 / OCM 468 / ACE-M).